The sequence spans 432 residues: Enolase (432 aa).

The tract at residues 41–64 is disordered; sequence QVPSGASTGSFEAHELRDGDPKRY. Residues 52-64 show a composition bias toward basic and acidic residues; the sequence is EAHELRDGDPKRY. Gln168 is a binding site for (2R)-2-phosphoglycerate. Catalysis depends on Glu211, which acts as the Proton donor. 3 residues coordinate Mg(2+): Asp248, Glu289, and Asp316. Residues Lys341, Arg370, Ser371, and Lys392 each coordinate (2R)-2-phosphoglycerate. Residue Lys341 is the Proton acceptor of the active site.

Belongs to the enolase family. Mg(2+) is required as a cofactor.

The protein localises to the cytoplasm. It localises to the secreted. It is found in the cell surface. The catalysed reaction is (2R)-2-phosphoglycerate = phosphoenolpyruvate + H2O. It participates in carbohydrate degradation; glycolysis; pyruvate from D-glyceraldehyde 3-phosphate: step 4/5. Catalyzes the reversible conversion of 2-phosphoglycerate (2-PG) into phosphoenolpyruvate (PEP). It is essential for the degradation of carbohydrates via glycolysis. The sequence is that of Enolase from Synechocystis sp. (strain ATCC 27184 / PCC 6803 / Kazusa).